A 411-amino-acid chain; its full sequence is Anthranilate synthase component 1 (411 aa).

L-tryptophan contacts are provided by residues Ser27 and 203–205 (PYM). Position 237–238 (237–238 (GT)) interacts with chorismate. Glu262 serves as a coordination point for Mg(2+). Chorismate contacts are provided by residues Tyr350, Arg369, 382–384 (GAG), and Gly384. Glu397 lines the Mg(2+) pocket.

Belongs to the anthranilate synthase component I family. As to quaternary structure, heterotetramer consisting of two non-identical subunits: a beta subunit (TrpG) and a large alpha subunit (TrpE). Mg(2+) is required as a cofactor.

The catalysed reaction is chorismate + L-glutamine = anthranilate + pyruvate + L-glutamate + H(+). It participates in amino-acid biosynthesis; L-tryptophan biosynthesis; L-tryptophan from chorismate: step 1/5. Feedback inhibited by tryptophan. In terms of biological role, part of a heterotetrameric complex that catalyzes the two-step biosynthesis of anthranilate, an intermediate in the biosynthesis of L-tryptophan. In the first step, the glutamine-binding beta subunit (TrpG) of anthranilate synthase (AS) provides the glutamine amidotransferase activity which generates ammonia as a substrate that, along with chorismate, is used in the second step, catalyzed by the large alpha subunit of AS (TrpE) to produce anthranilate. In the absence of TrpG, TrpE can synthesize anthranilate directly from chorismate and high concentrations of ammonia. In Archaeoglobus fulgidus (strain ATCC 49558 / DSM 4304 / JCM 9628 / NBRC 100126 / VC-16), this protein is Anthranilate synthase component 1 (trpE).